The primary structure comprises 397 residues: Succinate--CoA ligase [ADP-forming] subunit beta (397 aa).

The ATP-grasp domain maps to 9-254; that stretch reads KALLAQYGAP…ETEEDPKELA (246 aa). ATP-binding positions include Lys-46, 53-55, Glu-109, Ser-112, and Glu-117; that span reads GRG. The Mg(2+) site is built by Asn-209 and Asp-223. Residues Asn-274 and 331–333 each bind substrate; that span reads GIM.

Belongs to the succinate/malate CoA ligase beta subunit family. Heterotetramer of two alpha and two beta subunits. Mg(2+) serves as cofactor.

The enzyme catalyses succinate + ATP + CoA = succinyl-CoA + ADP + phosphate. It catalyses the reaction GTP + succinate + CoA = succinyl-CoA + GDP + phosphate. Its pathway is carbohydrate metabolism; tricarboxylic acid cycle; succinate from succinyl-CoA (ligase route): step 1/1. Functionally, succinyl-CoA synthetase functions in the citric acid cycle (TCA), coupling the hydrolysis of succinyl-CoA to the synthesis of either ATP or GTP and thus represents the only step of substrate-level phosphorylation in the TCA. The beta subunit provides nucleotide specificity of the enzyme and binds the substrate succinate, while the binding sites for coenzyme A and phosphate are found in the alpha subunit. The protein is Succinate--CoA ligase [ADP-forming] subunit beta of Jannaschia sp. (strain CCS1).